The chain runs to 297 residues: Thiosulfate sulfurtransferase (297 aa).

The residue at position 14 (Lys14) is an N6-acetyllysine; alternate. Lys14 carries the N6-succinyllysine; alternate modification. The Rhodanese 1 domain occupies 25 to 143 (LGPSLRVLDA…WLKEGHPVTS (119 aa)). Ser35 carries an O-linked (GlcNAc) serine glycan. A Phosphoserine modification is found at Ser38. Position 136 is an N6-acetyllysine; alternate (Lys136). At Lys136 the chain carries N6-succinyllysine; alternate. The tract at residues 144–159 (EPSRPEPAVFKATLNL) is hinge. Position 163 is an N6-acetyllysine (Lys163). A Rhodanese 2 domain is found at 173–288 (QSKRFQLVDS…WFRRAPPETR (116 aa)). Residue Lys175 is modified to N6-acetyllysine; alternate. Position 175 is an N6-succinyllysine; alternate (Lys175). Arg187 serves as a coordination point for substrate. N6-acetyllysine; alternate occurs at positions 219 and 224. Lys219 and Lys224 each carry N6-succinyllysine; alternate. An N6-acetyllysine modification is found at Lys236. N6-acetyllysine; alternate is present on Lys237. N6-succinyllysine; alternate is present on Lys237. Cys248 (cysteine persulfide intermediate) is an active-site residue. Position 250 (Lys250) interacts with substrate.

As to quaternary structure, monomer. As to expression, expressed in numerous tissues.

Its subcellular location is the mitochondrion matrix. The enzyme catalyses thiosulfate + hydrogen cyanide = thiocyanate + sulfite + 2 H(+). In terms of biological role, together with MRPL18, acts as a mitochondrial import factor for the cytosolic 5S rRNA. Only the nascent unfolded cytoplasmic form is able to bind to the 5S rRNA. Formation of iron-sulfur complexes and cyanide detoxification. The polypeptide is Thiosulfate sulfurtransferase (Tst) (Mus musculus (Mouse)).